We begin with the raw amino-acid sequence, 87 residues long: Large ribosomal subunit protein eL20 (87 aa).

The protein belongs to the eukaryotic ribosomal protein eL20 family. In terms of assembly, part of the 50S ribosomal subunit. Binds 23S rRNA.

In Hyperthermus butylicus (strain DSM 5456 / JCM 9403 / PLM1-5), this protein is Large ribosomal subunit protein eL20.